Reading from the N-terminus, the 89-residue chain is MEIRDKKAKYLEEKGFYRRAADRWAEIMVLLSSDAERKLAAQKRAFCINKSLRNNLQADNYSDIKQGVYKAYKKMGLVNEKIFRNYKEN.

Functionally, transcriptional activator of eaeA/bfpA expression in enteropathogenic E.coli. The sequence is that of Protein PerC (perC) from Escherichia coli O111:H-.